Here is a 433-residue protein sequence, read N- to C-terminus: PBSX phage terminase large subunit (433 aa).

The protein to B.subtilis YqaT and phage SPP1 terminase large subunit. In terms of assembly, dimer of a small and a large subunit.

Functions as a terminase. The chain is PBSX phage terminase large subunit (xtmB) from Bacillus subtilis (strain 168).